The chain runs to 433 residues: Tubulin epsilon and delta complex protein 2 (433 aa).

3 disordered regions span residues 45 to 69 (TGTR…ACTP), 95 to 169 (TKAG…VGMG), and 326 to 345 (QPPR…SCGG). Residues 107–120 (KSRSIVTSSGTTAS) are compositionally biased toward polar residues. Serine 159 bears the Phosphoserine mark. The segment covering 327–339 (PPRPCPVGRPPGA) has biased composition (pro residues).

Interacts with TEDC1. Found in a complex with TEDC1, TEDC2, TUBE1 and TUBD1.

Its subcellular location is the cell projection. It is found in the cilium. The protein localises to the cytoplasm. It localises to the cytoskeleton. The protein resides in the microtubule organizing center. Its subcellular location is the centrosome. It is found in the centriole. Its function is as follows. Acts as a positive regulator of ciliary hedgehog signaling. Required for centriole stability. In Homo sapiens (Human), this protein is Tubulin epsilon and delta complex protein 2.